A 118-amino-acid chain; its full sequence is Large ribosomal subunit protein uL18 (118 aa).

Belongs to the universal ribosomal protein uL18 family. As to quaternary structure, part of the 50S ribosomal subunit; part of the 5S rRNA/L5/L18/L25 subcomplex. Contacts the 5S and 23S rRNAs.

Its function is as follows. This is one of the proteins that bind and probably mediate the attachment of the 5S RNA into the large ribosomal subunit, where it forms part of the central protuberance. The protein is Large ribosomal subunit protein uL18 of Rickettsia bellii (strain OSU 85-389).